A 99-amino-acid polypeptide reads, in one-letter code: Large ribosomal subunit protein uL23cz/uL23cy (99 aa).

The disordered stretch occupies residues 1 to 37 (MGGVENPVSTDKAIRLPERKQYSSNAEPNPSKTEVKR). A compositionally biased stretch (basic and acidic residues) spans 12-21 (KAIRLPERKQ). Positions 22-32 (YSSNAEPNPSK) are enriched in polar residues.

This sequence belongs to the universal ribosomal protein uL23 family. Part of the 50S ribosomal subunit.

The protein localises to the plastid. It localises to the chloroplast. In terms of biological role, binds to 23S rRNA. The sequence is that of Large ribosomal subunit protein uL23cz/uL23cy (rpl23-A) from Selaginella uncinata (Blue spike-moss).